Reading from the N-terminus, the 149-residue chain is SKP1-like protein 14 (149 aa).

The interval 91-149 (LLAANYLNIKGLLDLSAQTVADRIKDKTPEEIREIFNIENDFTPEEEAAVRKENAWAFE) is interaction with the F-box domain of F-box proteins.

This sequence belongs to the SKP1 family. In terms of assembly, part of a SCF (SKP1-cullin-F-box) protein ligase complex. Interacts with CPR1/CPR30, At3g61590, At4g39550 and At5g49610. As to expression, restricted to inflorescences, pollen and leaves.

Its subcellular location is the nucleus. Its pathway is protein modification; protein ubiquitination. Functionally, involved in ubiquitination and subsequent proteasomal degradation of target proteins. Together with CUL1, RBX1 and a F-box protein, it forms a SCF E3 ubiquitin ligase complex. The functional specificity of this complex depends on the type of F-box protein. In the SCF complex, it serves as an adapter that links the F-box protein to CUL1. The polypeptide is SKP1-like protein 14 (ASK14) (Arabidopsis thaliana (Mouse-ear cress)).